Consider the following 316-residue polypeptide: Transaldolase (316 aa).

Lysine 132 serves as the catalytic Schiff-base intermediate with substrate.

The protein belongs to the transaldolase family. Type 1 subfamily. In terms of assembly, homodimer.

It localises to the cytoplasm. The catalysed reaction is D-sedoheptulose 7-phosphate + D-glyceraldehyde 3-phosphate = D-erythrose 4-phosphate + beta-D-fructose 6-phosphate. The protein operates within carbohydrate degradation; pentose phosphate pathway; D-glyceraldehyde 3-phosphate and beta-D-fructose 6-phosphate from D-ribose 5-phosphate and D-xylulose 5-phosphate (non-oxidative stage): step 2/3. In terms of biological role, transaldolase is important for the balance of metabolites in the pentose-phosphate pathway. The sequence is that of Transaldolase from Vibrio vulnificus (strain CMCP6).